We begin with the raw amino-acid sequence, 336 residues long: DNA repair protein RAD51 homolog B (336 aa).

Residues 45–74 (TVEAVAYAPKKELLNIKGISEAKAEKILAE) form the HhH domain. 124–131 (GEFRTGKT) is an ATP binding site. A Nuclear export signal motif is present at residues 242–257 (LARFLRMLLRLADEFG).

It belongs to the RecA family. RAD51 subfamily. In terms of assembly, forms linear homooligomers, giving rise to a RAD51 nucleoprotein filament, which is essential for strand-pairing reactions during DNA recombination.

It is found in the nucleus. It localises to the cytoplasm. The protein resides in the chromosome. In terms of biological role, plays an important role in homologous strand exchange, a key step in DNA repair through homologous recombination (HR). Binds to single-stranded DNA in an ATP-dependent manner to form nucleoprotein filaments which are essential for the homology search and strand exchange. Catalyzes the recognition of homology and strand exchange between homologous DNA partners to form a joint molecule between a processed DNA break and the repair template. Recruited to resolve stalled replication forks during replication stress. Also involved in interstrand cross-link repair. This is DNA repair protein RAD51 homolog B (rad51-b) from Xenopus laevis (African clawed frog).